Here is a 21-residue protein sequence, read N- to C-terminus: Nucleoside diphosphate kinase (21 aa).

Histidine 4 acts as the Pros-phosphohistidine intermediate in catalysis.

This sequence belongs to the NDK family. In terms of assembly, homohexamer. Mg(2+) is required as a cofactor.

The protein resides in the cytoplasm. It carries out the reaction a 2'-deoxyribonucleoside 5'-diphosphate + ATP = a 2'-deoxyribonucleoside 5'-triphosphate + ADP. The catalysed reaction is a ribonucleoside 5'-diphosphate + ATP = a ribonucleoside 5'-triphosphate + ADP. In terms of biological role, major role in the synthesis of nucleoside triphosphates other than ATP. The ATP gamma phosphate is transferred to the NDP beta phosphate via a ping-pong mechanism, using a phosphorylated active-site intermediate. This Candida albicans (Yeast) protein is Nucleoside diphosphate kinase (NDK1).